A 248-amino-acid chain; its full sequence is tRNA pseudouridine synthase A (248 aa).

D54 acts as the Nucleophile in catalysis. Residue Y112 coordinates substrate.

It belongs to the tRNA pseudouridine synthase TruA family. As to quaternary structure, homodimer.

The enzyme catalyses uridine(38/39/40) in tRNA = pseudouridine(38/39/40) in tRNA. In terms of biological role, formation of pseudouridine at positions 38, 39 and 40 in the anticodon stem and loop of transfer RNAs. This Geobacillus sp. (strain WCH70) protein is tRNA pseudouridine synthase A.